Reading from the N-terminus, the 927-residue chain is SPX and EXS domain-containing protein 5 (927 aa).

The 460-residue stretch at 1–460 (MKFGKYLESQ…GLSIGSQVMS (460 aa)) folds into the SPX domain. Disordered regions lie at residues 54-78 (KINS…SSSN), 204-239 (KKNK…QHLQ), 257-305 (PIKS…DQDP), and 326-355 (SDNC…GGNN). 2 stretches are compositionally biased toward low complexity: residues 60–78 (PSPT…SSSN) and 208–224 (LNNN…NNNN). The segment covering 257 to 270 (PIKSTPLSPKQQDG) has biased composition (polar residues). Residues 286–299 (LEEEEEEEEEEDDN) show a composition bias toward acidic residues. Transmembrane regions (helical) follow at residues 516 to 536 (FFSG…YYFI), 553 to 573 (VYSA…DCWV), 597 to 617 (IFQA…VYMW), 636 to 656 (PLVL…IFQL), 682 to 702 (FFMG…AQFV), 769 to 789 (LSIV…DSGW), 845 to 862 (FVYY…TTWT), and 869 to 889 (QLTN…IEIL). The EXS domain maps to 717–927 (GCIRYARYFN…LPYQIRDNEN (211 aa)).

This sequence belongs to the SYG1 (TC 2.A.94) family.

It is found in the membrane. The sequence is that of SPX and EXS domain-containing protein 5 from Dictyostelium discoideum (Social amoeba).